We begin with the raw amino-acid sequence, 361 residues long: D-alanine--D-alanine ligase (361 aa).

One can recognise an ATP-grasp domain in the interval 134–344; it reads KLLLKSFDIP…FKDLVDNLID (211 aa). Residue 167–222 participates in ATP binding; sequence KEVLGYPVIVKPAVLGSSIGINVAYSENQIESFIKEALKYDLTIVIEKFIEAREIE. Positions 297, 311, and 313 each coordinate Mg(2+).

Belongs to the D-alanine--D-alanine ligase family. The cofactor is Mg(2+). It depends on Mn(2+) as a cofactor.

The protein resides in the cytoplasm. The catalysed reaction is 2 D-alanine + ATP = D-alanyl-D-alanine + ADP + phosphate + H(+). The protein operates within cell wall biogenesis; peptidoglycan biosynthesis. Cell wall formation. In Borreliella burgdorferi (strain ATCC 35210 / DSM 4680 / CIP 102532 / B31) (Borrelia burgdorferi), this protein is D-alanine--D-alanine ligase.